A 180-amino-acid chain; its full sequence is MPVRPARCYKRIKGPPYTREEYIHGAPMIQIPKFDMGTTSAAARTAFTMTAKLVVEERGQIRMQALEAARQMASKYLTKYVGDANYYLRLNVVPHHVLRENRMLAMAGADRLQEGMRLAFGSPAGRAARVEPGQVLFYAEFKPEHLPHIKEALRRAASKLPLPTRIVIEPKGNGGNKTVT.

It belongs to the universal ribosomal protein uL16 family.

This chain is Large ribosomal subunit protein uL16, found in Pyrobaculum aerophilum (strain ATCC 51768 / DSM 7523 / JCM 9630 / CIP 104966 / NBRC 100827 / IM2).